A 535-amino-acid polypeptide reads, in one-letter code: MTKYIFVTGGVVSSLGKGITAASLGRLLKNRGLNVTIQKFDPYINVDPGTMSPYQHGEVFVTDDGAETDLDLGHYERFIDINLNKYSNVTTGKIYSSVLQKERRGEYLGGTVQVIPHITNEIKERVYRSGRETNADVVITEIGGTVGDIESLPFLEAIRQIKSDIGRDNVMYIHCTLIPYLKAAGEMKTKPTQHSVKELRSLGIQPNIIVVRTEMPVSQDMKDKLALFCDIDTKAVIEARDADTLYAVPLSLQEQNMDQIVCDHLKLDNPAADMTEWTALVEKVRNLSKKTKIALVGKYVELQDAYISVVEALRHAGYSFDTDVEVKWVNAEHVTAENVQELVGDTDGILVPGGFGDRGVEGKIVAIQYARENKVPFLGICLGMQLASIEFARNVLGLEGANSSEINPDTPYAIIDLLPEQKDVEDLGGTLRLGLYPCKLAEETNAYNAYNEPVVYERHRHRYEFNNQFRPDMEKAGFVFSGTSPDGRLVEIIELKDHPWFVAAQFHPELVSRPNRPQPLFHDFVRASITNKESK.

The segment at Met1–Leu267 is amidoligase domain. A CTP-binding site is contributed by Ser13. Ser13 lines the UTP pocket. Ser14–Ile19 contributes to the ATP binding site. An L-glutamine-binding site is contributed by Tyr54. Asp71 is an ATP binding site. The Mg(2+) site is built by Asp71 and Glu141. Residues Asp148 to Glu150, Lys188 to Gln193, and Lys224 each bind CTP. UTP contacts are provided by residues Lys188–Gln193 and Lys224. Residue Arg240–Ala242 participates in ATP binding. In terms of domain architecture, Glutamine amidotransferase type-1 spans Lys292 to Ser534. Position 354 (Gly354) interacts with L-glutamine. The active-site Nucleophile; for glutamine hydrolysis is Cys381. L-glutamine contacts are provided by residues Leu382 to Gln385, Glu405, and Arg462. Residues His507 and Glu509 contribute to the active site.

The protein belongs to the CTP synthase family. In terms of assembly, homotetramer.

It catalyses the reaction UTP + L-glutamine + ATP + H2O = CTP + L-glutamate + ADP + phosphate + 2 H(+). The enzyme catalyses L-glutamine + H2O = L-glutamate + NH4(+). The catalysed reaction is UTP + NH4(+) + ATP = CTP + ADP + phosphate + 2 H(+). Its pathway is pyrimidine metabolism; CTP biosynthesis via de novo pathway; CTP from UDP: step 2/2. With respect to regulation, allosterically activated by GTP, when glutamine is the substrate; GTP has no effect on the reaction when ammonia is the substrate. The allosteric effector GTP functions by stabilizing the protein conformation that binds the tetrahedral intermediate(s) formed during glutamine hydrolysis. Inhibited by the product CTP, via allosteric rather than competitive inhibition. Its function is as follows. Catalyzes the ATP-dependent amination of UTP to CTP with either L-glutamine or ammonia as the source of nitrogen. Regulates intracellular CTP levels through interactions with the four ribonucleotide triphosphates. The protein is CTP synthase of Bacillus cereus (strain AH187).